A 220-amino-acid chain; its full sequence is Small ribosomal subunit protein uS3c (220 aa).

Residues 43–120 (IQHYVEKNTR…RLNIAIIRVA (78 aa)) enclose the KH type-2 domain.

It belongs to the universal ribosomal protein uS3 family. In terms of assembly, part of the 30S ribosomal subunit.

It localises to the plastid. It is found in the chloroplast. This Piper cenocladum (Ant piper) protein is Small ribosomal subunit protein uS3c (rps3).